The primary structure comprises 143 residues: MSLSDKDKAAVKGLWAKISPKADDIGAEALGRMLTVYPQTKTYFAHWADLSPGSGPVKKHGKVIMGAVGDAVSKIDDLVGGLAALSELHAFKLRVDPANFKILAHNVIVVIGMLYPGDFPPEVHMSVDKFFQNLALALSEKYR.

Ser-2 carries the post-translational modification N-acetylserine. The 142-residue stretch at 2–143 (SLSDKDKAAV…LALALSEKYR (142 aa)) folds into the Globin domain. His-60 contacts O2. Residue His-89 coordinates heme b.

This sequence belongs to the globin family. As to quaternary structure, heterotetramer of two alpha chains and two beta chains. In terms of tissue distribution, red blood cells.

Involved in oxygen transport from gills to the various peripheral tissues. The chain is Hemoglobin subunit alpha (hba) from Cyprinus carpio (Common carp).